We begin with the raw amino-acid sequence, 269 residues long: Formamidopyrimidine-DNA glycosylase (269 aa).

The active-site Schiff-base intermediate with DNA is Pro2. The Proton donor role is filled by Glu3. The Proton donor; for beta-elimination activity role is filled by Lys57. His90, Arg109, and Lys150 together coordinate DNA. Residues 235 to 269 (QVYGRKGEPCRVCGTPIVATKHAQRATFYCRQCQK) form an FPG-type zinc finger. Catalysis depends on Arg259, which acts as the Proton donor; for delta-elimination activity.

It belongs to the FPG family. Monomer. Zn(2+) is required as a cofactor.

It carries out the reaction Hydrolysis of DNA containing ring-opened 7-methylguanine residues, releasing 2,6-diamino-4-hydroxy-5-(N-methyl)formamidopyrimidine.. The catalysed reaction is 2'-deoxyribonucleotide-(2'-deoxyribose 5'-phosphate)-2'-deoxyribonucleotide-DNA = a 3'-end 2'-deoxyribonucleotide-(2,3-dehydro-2,3-deoxyribose 5'-phosphate)-DNA + a 5'-end 5'-phospho-2'-deoxyribonucleoside-DNA + H(+). In terms of biological role, involved in base excision repair of DNA damaged by oxidation or by mutagenic agents. Acts as a DNA glycosylase that recognizes and removes damaged bases. Has a preference for oxidized purines, such as 7,8-dihydro-8-oxoguanine (8-oxoG). Has AP (apurinic/apyrimidinic) lyase activity and introduces nicks in the DNA strand. Cleaves the DNA backbone by beta-delta elimination to generate a single-strand break at the site of the removed base with both 3'- and 5'-phosphates. This is Formamidopyrimidine-DNA glycosylase from Shigella dysenteriae serotype 1 (strain Sd197).